We begin with the raw amino-acid sequence, 194 residues long: ECF RNA polymerase sigma factor SigX (194 aa).

The Polymerase core binding motif lies at 32–45; that stretch reads DLLQEVYIRVLNSY. Positions 136–155 form a DNA-binding region, H-T-H motif; it reads IQETAKALRFSESKVKTTQH.

Belongs to the sigma-70 factor family. ECF subfamily. As to quaternary structure, interacts transiently with the RNAP core.

The protein resides in the cell membrane. Functionally, sigma factors are initiation factors that promote the attachment of RNA polymerase (RNAP) to specific initiation sites and are then released. May be involved in the regulation of iron metabolism. Associates with RNAP core during early growth phases, association decreases as cells age. The sequence is that of ECF RNA polymerase sigma factor SigX (sigX) from Bacillus subtilis (strain 168).